The following is a 158-amino-acid chain: NADPH-dependent 7-cyano-7-deazaguanine reductase (158 aa).

Cys56 acts as the Thioimide intermediate in catalysis. Residue Asp63 is the Proton donor of the active site. Substrate-binding positions include 78–80 (LES) and 97–98 (HE).

This sequence belongs to the GTP cyclohydrolase I family. QueF type 1 subfamily.

It localises to the cytoplasm. The catalysed reaction is 7-aminomethyl-7-carbaguanine + 2 NADP(+) = 7-cyano-7-deazaguanine + 2 NADPH + 3 H(+). It functions in the pathway tRNA modification; tRNA-queuosine biosynthesis. Functionally, catalyzes the NADPH-dependent reduction of 7-cyano-7-deazaguanine (preQ0) to 7-aminomethyl-7-deazaguanine (preQ1). This chain is NADPH-dependent 7-cyano-7-deazaguanine reductase, found in Rhodopseudomonas palustris (strain TIE-1).